The primary structure comprises 317 residues: Malate dehydrogenase (317 aa).

NAD(+)-binding positions include 13 to 18 (GAGNIG) and Asp-38. Arg-87 and Arg-93 together coordinate substrate. Residues Asn-100 and 123–125 (VTN) contribute to the NAD(+) site. 2 residues coordinate substrate: Asn-125 and Arg-156. The active-site Proton acceptor is His-180.

It belongs to the LDH/MDH superfamily. MDH type 3 family.

The catalysed reaction is (S)-malate + NAD(+) = oxaloacetate + NADH + H(+). Functionally, catalyzes the reversible oxidation of malate to oxaloacetate. This Anaplasma marginale (strain St. Maries) protein is Malate dehydrogenase.